The sequence spans 128 residues: Aspartate 1-decarboxylase (128 aa).

Serine 25 acts as the Schiff-base intermediate with substrate; via pyruvic acid in catalysis. Serine 25 carries the pyruvic acid (Ser) modification. Threonine 57 serves as a coordination point for substrate. Tyrosine 58 acts as the Proton donor in catalysis. A substrate-binding site is contributed by 73-75; the sequence is GAA.

The protein belongs to the PanD family. In terms of assembly, heterooctamer of four alpha and four beta subunits. Pyruvate is required as a cofactor. In terms of processing, is synthesized initially as an inactive proenzyme, which is activated by self-cleavage at a specific serine bond to produce a beta-subunit with a hydroxyl group at its C-terminus and an alpha-subunit with a pyruvoyl group at its N-terminus.

Its subcellular location is the cytoplasm. It carries out the reaction L-aspartate + H(+) = beta-alanine + CO2. The protein operates within cofactor biosynthesis; (R)-pantothenate biosynthesis; beta-alanine from L-aspartate: step 1/1. Catalyzes the pyruvoyl-dependent decarboxylation of aspartate to produce beta-alanine. This chain is Aspartate 1-decarboxylase, found in Chlorobium limicola (strain DSM 245 / NBRC 103803 / 6330).